Consider the following 597-residue polypeptide: Putative lipase ATG15 (597 aa).

The Cytoplasmic segment spans residues 1-15; it reads MTLEKNRHANKGTSW. A helical; Signal-anchor for type II membrane protein transmembrane segment spans residues 16 to 36; the sequence is TWMIYKFVVGVITVAILVLFI. Residues 37 to 597 are Lumenal-facing; it reads TQKSVSQAQD…DDDEDTFERK (561 aa). N-linked (GlcNAc...) asparagine glycans are attached at residues Asn-195, Asn-262, and Asn-346. Ser-364 serves as the catalytic Charge relay system. An N-linked (GlcNAc...) asparagine glycan is attached at Asn-481. The interval 507-570 is disordered; that stretch reads EKDEPKLPNP…PTDQDPPKKC (64 aa). Residues 519-554 show a composition bias toward low complexity; it reads SSSKSTLSTKTTSLKSSSTYSGSTSSSTVTKTTQTS.

This sequence belongs to the AB hydrolase superfamily. Lipase family. Binds to both phosphatidylinositol (PI) and phosphatidylinositol 3,5-bisphosphate (PIP2).

The protein resides in the endosome. The protein localises to the multivesicular body membrane. It localises to the prevacuolar compartment membrane. It carries out the reaction a triacylglycerol + H2O = a diacylglycerol + a fatty acid + H(+). Lipase which is essential for lysis of subvacuolar cytoplasm to vacuole targeted bodies and intravacuolar autophagic bodies. Involved in the lysis of intravacuolar multivesicular body (MVB) vesicles. The intravacuolar membrane disintegration by ATG15 is critical to life span extension. In Candida albicans (strain SC5314 / ATCC MYA-2876) (Yeast), this protein is Putative lipase ATG15 (ATG15).